The following is a 435-amino-acid chain: Nematode resistance protein-like HSPRO2 (435 aa).

As to quaternary structure, interacts with SNF4.

It localises to the cytoplasm. In terms of biological role, positive regulator of basal resistance. This chain is Nematode resistance protein-like HSPRO2 (HSPRO2), found in Arabidopsis thaliana (Mouse-ear cress).